The following is a 126-amino-acid chain: MARIAGIDLPREKRVEIALTYIYGIGLTRSKEILARTGVSPDTRVKNLSEAEQSTLREAIEKTYKVEGDLRNEVGQNIKRLMDIGAYRGLRHRRGLPVRGQRTKTNARTRKGPKKTVAGKKKATRK.

Residues 92-126 (HRRGLPVRGQRTKTNARTRKGPKKTVAGKKKATRK) form a disordered region.

The protein belongs to the universal ribosomal protein uS13 family. Part of the 30S ribosomal subunit. Forms a loose heterodimer with protein S19. Forms two bridges to the 50S subunit in the 70S ribosome.

Functionally, located at the top of the head of the 30S subunit, it contacts several helices of the 16S rRNA. In the 70S ribosome it contacts the 23S rRNA (bridge B1a) and protein L5 of the 50S subunit (bridge B1b), connecting the 2 subunits; these bridges are implicated in subunit movement. Contacts the tRNAs in the A and P-sites. This Deinococcus radiodurans (strain ATCC 13939 / DSM 20539 / JCM 16871 / CCUG 27074 / LMG 4051 / NBRC 15346 / NCIMB 9279 / VKM B-1422 / R1) protein is Small ribosomal subunit protein uS13.